The primary structure comprises 400 residues: uncharacterized protein (400 aa).

The 220-residue stretch at 161–380 (NDLLNIIDIV…YVVKVIVMRL (220 aa)) folds into the TR mART core domain.

This is an uncharacterized protein from Acanthamoeba polyphaga (Amoeba).